The following is a 257-amino-acid chain: V-type proton ATPase subunit D (257 aa).

The segment at 215-257 (KEQEAAQKALEGPGPGEDAAHSENNPPRNLLASEEDNLPVLFN) is disordered.

The protein belongs to the V-ATPase D subunit family. In terms of assembly, V-ATPase is a heteromultimeric enzyme made up of two complexes: the ATP-hydrolytic V1 complex and the proton translocation V0 complex. The V1 complex consists of three catalytic AB heterodimers that form a heterohexamer, three peripheral stalks each consisting of EG heterodimers, one central rotor including subunits D and F, and the regulatory subunits C and H. The proton translocation complex V0 consists of the proton transport subunit a, a ring of proteolipid subunits c9c'', rotary subunit d, subunits e and f, and the accessory subunits vah-19/Ac45 and vah-20/PRR.

Its function is as follows. Subunit of the V1 complex of vacuolar(H+)-ATPase (V-ATPase), a multisubunit enzyme composed of a peripheral complex (V1) that hydrolyzes ATP and a membrane integral complex (V0) that translocates protons. V-ATPase is responsible for acidifying and maintaining the pH of intracellular compartments and in some cell types, is targeted to the plasma membrane, where it is responsible for acidifying the extracellular environment. In Caenorhabditis elegans, this protein is V-type proton ATPase subunit D.